We begin with the raw amino-acid sequence, 439 residues long: Oxysterol-binding protein 6 (439 aa).

2 disordered regions span residues 1-40 (MSAK…SGAD) and 409-439 (ESST…QTTN). 2 stretches are compositionally biased toward polar residues: residues 409–419 (ESSTPNLSKVD) and 429–439 (PVDNSIPQTTN).

Belongs to the OSBP family.

This Dictyostelium discoideum (Social amoeba) protein is Oxysterol-binding protein 6 (osbF).